The sequence spans 510 residues: MEFTECKTTFIHLPDKSFLYDVFVSVYNFYHPIHAYLSIFLCVLGTIANFCNIVVLTRRTMRTPVNMILTAMASCDTVVLFSNLIYTTHYSFVAFKFCHPKHWSYSWALFLIAHAHLSLVAHSSSVWLSVMLALVRYVTLRSRGNMGGMQVTLRHSYYAVAVTVSLVAVLNAPNFLNYKINEQPLNETCTDLDPMFWNSPAYLPGIADIAKANSCLVFRLSYWISGMVFKVLPCALLSLFVWLLLRILREVRENRQRLLKNSQHRPPNQTTTRNGQRLSISVAGNEKLGRNGSLRGRGERVDRTTHMLLAIVAVMLVTELPQGIMAVLSGMCSEEFRIYIYNNLGDILDLFSLCGSCCSFIIYCSMSGQFRNEFHRVFVPAKVRCLRMSSPSIRRPSDAYSTTKMTFLKPNEKNGNGMNGNGTYSEDTRSASVKMVGIQVRRNSTEITRMTGCDSITPCSPMPTSFPSSPLPPIRSGEDESTDETSHLLNSSGPNSTASADGIRGHFQNI.

At 1 to 35 (MEFTECKTTFIHLPDKSFLYDVFVSVYNFYHPIHA) the chain is on the extracellular side. A helical membrane pass occupies residues 36–56 (YLSIFLCVLGTIANFCNIVVL). The Cytoplasmic portion of the chain corresponds to 57 to 64 (TRRTMRTP). A helical transmembrane segment spans residues 65–85 (VNMILTAMASCDTVVLFSNLI). Residues 86-107 (YTTHYSFVAFKFCHPKHWSYSW) are Extracellular-facing. A helical membrane pass occupies residues 108–128 (ALFLIAHAHLSLVAHSSSVWL). Over 129-155 (SVMLALVRYVTLRSRGNMGGMQVTLRH) the chain is Cytoplasmic. A helical transmembrane segment spans residues 156–176 (SYYAVAVTVSLVAVLNAPNFL). The Extracellular portion of the chain corresponds to 177–223 (NYKINEQPLNETCTDLDPMFWNSPAYLPGIADIAKANSCLVFRLSYW). A glycan (N-linked (GlcNAc...) asparagine) is linked at N186. Residues 224–244 (ISGMVFKVLPCALLSLFVWLL) traverse the membrane as a helical segment. The Cytoplasmic portion of the chain corresponds to 245–307 (LRILREVREN…GERVDRTTHM (63 aa)). A helical transmembrane segment spans residues 308-328 (LLAIVAVMLVTELPQGIMAVL). The Extracellular segment spans residues 329 to 343 (SGMCSEEFRIYIYNN). A helical membrane pass occupies residues 344-364 (LGDILDLFSLCGSCCSFIIYC). Residues 365 to 510 (SMSGQFRNEF…DGIRGHFQNI (146 aa)) lie on the Cytoplasmic side of the membrane. Positions 452–510 (GCDSITPCSPMPTSFPSSPLPPIRSGEDESTDETSHLLNSSGPNSTASADGIRGHFQNI) are disordered. Over residues 487–499 (HLLNSSGPNSTAS) the composition is skewed to polar residues.

This sequence belongs to the G-protein coupled receptor 1 family. Expressed in head neurons including the RID neuron and the paired AIY neurons, and in tail neurons including the paired PHA and PHB neurons. Not expressed in AVE and AVA neurons.

The protein resides in the cell membrane. Its function is as follows. G-protein coupled receptor. G-protein coupled receptor for flp-13 RFamide neuropeptides in vitro. Upon activation by flp-13 RFamide neuropeptides, promotes sleep in response to cellular stress also known as stress-induced sleep (SIS), probably by inhibiting the activity of wake-promoting neurons. The polypeptide is G-protein coupled receptor dmsr-1 (Caenorhabditis elegans).